The chain runs to 855 residues: MTARGTRKNYQRLWRWGTMLLGMLMICSAAENLWVTVYYGVPVWKEATTTLFCASDARAYATEVHNVWATHACVPTDPNPQEVVLGNVTENFDMWKNNMVEQMQEDIISLWDQSLKPCVKLTPLCVTLDCTDVNTTSSSLRNATNTTSSSWETMEKGELKNCSFNTTTSIRDKMQEQYALFYKLDVLPIDKNDTKFRLIHCNTSTITQACPKISFEPIPMHYCTPAGFAILKCNDKKFNGTGPCTNVSTVQCTHGIKPVVSTQLLLNGSLAEEEVIIRSSNFTNNAKIIIVQLNKSVEINCTRPNNNTRNRISIGPGRAFHTTKQIIGDIRQAHCNLSRATWEKTLEQIATKLRKQFRNKTIAFDRSSGGDPEIVMHSFNCGGEFFYCNTSQLFNSTWNDTTRANSTEVTITLPCRIKQIVNMWQEVGKAMYAPPISGQIRCSSKITGLLLTRDGGKNTTNGIEIFRPAGGDMRDNWRSELYKYKVVKIEPLGVAPTKARRRVVQREKRAVGMLGAMFLGFLGAAGSTMGARSMTLTVQARQLLSGIVQQQNNLLRAIEAQQHLLQLTVWGIKQLQARVLAVERYLKDQQLLGIWGCSGKLICTTTVPWNASWSNKSLNEIWDNMTWMQWEREIDNYTHLIYTLIEESQNQQEKNEQELLELDKWAGLWSWFSITNWLWYIRIFIIIVGGLVGLRIVFAVLSIVNRVRQGYSPLSFQTRLPTQRGPDRPEGIEEEGGERDRDRSGRLVDGFLALIWDDLRSLCLFSYHRLRDLILIVARIVELLGRRGWEVLKYWWNLLQYWSQELKNSVISLLNATAIAVAEGTDRVIEIVQRAYRAFLNIPRRIRQGLERALL.

The N-terminal stretch at 1 to 31 (MTARGTRKNYQRLWRWGTMLLGMLMICSAAE) is a signal peptide. Residues 32 to 683 (NLWVTVYYGV…ITNWLWYIRI (652 aa)) lie on the Extracellular side of the membrane. An intrachain disulfide couples C53 to C73. N87, N134, N142, N145, N161, N165, N192, N202, N239, N246, N267, N281, N294, N300, N306, N336, and N359 each carry an N-linked (GlcNAc...) asparagine; by host glycan. 5 cysteine pairs are disulfide-bonded: C118/C210, C125/C201, C130/C162, C223/C252, and C233/C244. Positions 130 to 161 (CTDVNTTSSSLRNATNTTSSSWETMEKGELKN) are V1. Residues 162–201 (CSFNTTTSIRDKMQEQYALFYKLDVLPIDKNDTKFRLIHC) are V2. Positions 301–334 (CTRPNNNTRNRISIGPGRAFHTTKQIIGDIRQAH) are V3. C301 and C335 form a disulfide bridge. The CD4-binding loop stretch occupies residues 367-377 (SSGGDPEIVMH). Disulfide bonds link C381–C442 and C388–C415. The segment at 388 to 415 (CNTSQLFNSTWNDTTRANSTEVTITLPC) is V4. N389, N395, N399, N405, and N458 each carry an N-linked (GlcNAc...) asparagine; by host glycan. V5 stretches follow at residues 458 to 469 (NTTNGIEIFRPA) and 460 to 469 (TNGIEIFRPA). Positions 510–531 (AVGMLGAMFLGFLGAAGSTMGA) are fusion peptide. The segment at 573–591 (KQLQARVLAVERYLKDQQL) is immunosuppression. C597 and C603 are joined by a disulfide. 4 N-linked (GlcNAc...) asparagine; by host glycosylation sites follow: N610, N615, N624, and N636. A coiled-coil region spans residues 632–666 (REIDNYTHLIYTLIEESQNQQEKNEQELLELDKWA). The tract at residues 661–682 (ELDKWAGLWSWFSITNWLWYIR) is MPER; binding to GalCer. A helical transmembrane segment spans residues 684–704 (FIIIVGGLVGLRIVFAVLSIV). Topologically, residues 705–855 (NRVRQGYSPL…IRQGLERALL (151 aa)) are cytoplasmic. The YXXL motif; contains endocytosis signal motif lies at 711–714 (YSPL). A disordered region spans residues 718–742 (TRLPTQRGPDRPEGIEEEGGERDRD). C763 is lipidated: S-palmitoyl cysteine; by host. The Di-leucine internalization motif motif lies at 854 to 855 (LL).

It belongs to the HIV-1 env protein family. In terms of assembly, the mature envelope protein (Env) consists of a homotrimer of non-covalently associated gp120-gp41 heterodimers. The resulting complex protrudes from the virus surface as a spike. There seems to be as few as 10 spikes on the average virion. Interacts with host CD4, CCR5 and CXCR4. Gp120 also interacts with the C-type lectins CD209/DC-SIGN and CLEC4M/DC-SIGNR (collectively referred to as DC-SIGN(R)). Gp120 and gp41 interact with GalCer. Gp120 interacts with host ITGA4/ITGB7 complex; on CD4+ T-cells, this interaction results in rapid activation of integrin ITGAL/LFA-1, which facilitates efficient cell-to-cell spreading of HIV-1. Gp120 interacts with cell-associated heparan sulfate; this interaction increases virus infectivity on permissive cells and may be involved in infection of CD4- cells. The mature envelope protein (Env) consists of a homotrimer of non-covalently associated gp120-gp41 heterodimers. The resulting complex protrudes from the virus surface as a spike. There seems to be as few as 10 spikes on the average virion. In terms of processing, highly glycosylated by host. The high number of glycan on the protein is reffered to as 'glycan shield' because it contributes to hide protein sequence from adaptive immune system. Post-translationally, palmitoylation of the transmembrane protein and of Env polyprotein (prior to its proteolytic cleavage) is essential for their association with host cell membrane lipid rafts. Palmitoylation is therefore required for envelope trafficking to classical lipid rafts, but not for viral replication. Specific enzymatic cleavages in vivo yield mature proteins. Envelope glycoproteins are synthesized as an inactive precursor that is heavily N-glycosylated and processed likely by host cell furin in the Golgi to yield the mature SU and TM proteins. The cleavage site between SU and TM requires the minimal sequence [KR]-X-[KR]-R. About 2 of the 9 disulfide bonds of gp41 are reduced by P4HB/PDI, following binding to CD4 receptor.

It is found in the virion membrane. The protein localises to the host cell membrane. The protein resides in the host endosome membrane. In terms of biological role, oligomerizes in the host endoplasmic reticulum into predominantly trimers. In a second time, gp160 transits in the host Golgi, where glycosylation is completed. The precursor is then proteolytically cleaved in the trans-Golgi and thereby activated by cellular furin or furin-like proteases to produce gp120 and gp41. Attaches the virus to the host lymphoid cell by binding to the primary receptor CD4. This interaction induces a structural rearrangement creating a high affinity binding site for a chemokine coreceptor like CXCR4 and/or CCR5. Acts as a ligand for CD209/DC-SIGN and CLEC4M/DC-SIGNR, which are respectively found on dendritic cells (DCs), and on endothelial cells of liver sinusoids and lymph node sinuses. These interactions allow capture of viral particles at mucosal surfaces by these cells and subsequent transmission to permissive cells. HIV subverts the migration properties of dendritic cells to gain access to CD4+ T-cells in lymph nodes. Virus transmission to permissive T-cells occurs either in trans (without DCs infection, through viral capture and transmission), or in cis (following DCs productive infection, through the usual CD4-gp120 interaction), thereby inducing a robust infection. In trans infection, bound virions remain infectious over days and it is proposed that they are not degraded, but protected in non-lysosomal acidic organelles within the DCs close to the cell membrane thus contributing to the viral infectious potential during DCs' migration from the periphery to the lymphoid tissues. On arrival at lymphoid tissues, intact virions recycle back to DCs' cell surface allowing virus transmission to CD4+ T-cells. Its function is as follows. Acts as a class I viral fusion protein. Under the current model, the protein has at least 3 conformational states: pre-fusion native state, pre-hairpin intermediate state, and post-fusion hairpin state. During fusion of viral and target intracellular membranes, the coiled coil regions (heptad repeats) assume a trimer-of-hairpins structure, positioning the fusion peptide in close proximity to the C-terminal region of the ectodomain. The formation of this structure appears to drive apposition and subsequent fusion of viral and target cell membranes. Complete fusion occurs in host cell endosomes and is dynamin-dependent, however some lipid transfer might occur at the plasma membrane. The virus undergoes clathrin-dependent internalization long before endosomal fusion, thus minimizing the surface exposure of conserved viral epitopes during fusion and reducing the efficacy of inhibitors targeting these epitopes. Membranes fusion leads to delivery of the nucleocapsid into the cytoplasm. The polypeptide is Envelope glycoprotein gp160 (Homo sapiens (Human)).